A 529-amino-acid polypeptide reads, in one-letter code: Bifunctional purine biosynthesis protein PurH (529 aa).

Residues 1-148 (MQQRRPVRRA…KNHKDVAIVV (148 aa)) form the MGS-like domain.

This sequence belongs to the PurH family.

It carries out the reaction (6R)-10-formyltetrahydrofolate + 5-amino-1-(5-phospho-beta-D-ribosyl)imidazole-4-carboxamide = 5-formamido-1-(5-phospho-D-ribosyl)imidazole-4-carboxamide + (6S)-5,6,7,8-tetrahydrofolate. The catalysed reaction is IMP + H2O = 5-formamido-1-(5-phospho-D-ribosyl)imidazole-4-carboxamide. The protein operates within purine metabolism; IMP biosynthesis via de novo pathway; 5-formamido-1-(5-phospho-D-ribosyl)imidazole-4-carboxamide from 5-amino-1-(5-phospho-D-ribosyl)imidazole-4-carboxamide (10-formyl THF route): step 1/1. It functions in the pathway purine metabolism; IMP biosynthesis via de novo pathway; IMP from 5-formamido-1-(5-phospho-D-ribosyl)imidazole-4-carboxamide: step 1/1. This chain is Bifunctional purine biosynthesis protein PurH, found in Salmonella paratyphi A (strain ATCC 9150 / SARB42).